The sequence spans 325 residues: Thiamine-monophosphate kinase (325 aa).

Residues aspartate 30, serine 45, threonine 46, and aspartate 47 each contribute to the Mg(2+) site. Position 54 (histidine 54) interacts with substrate. 2 residues coordinate Mg(2+): aspartate 75 and aspartate 122. ATP is bound by residues 121–122 (GD) and arginine 146. Aspartate 212 is a Mg(2+) binding site. ATP is bound at residue serine 214. Residue aspartate 215 coordinates Mg(2+). 2 residues coordinate substrate: glutamate 263 and tyrosine 319.

It belongs to the thiamine-monophosphate kinase family.

The catalysed reaction is thiamine phosphate + ATP = thiamine diphosphate + ADP. Its pathway is cofactor biosynthesis; thiamine diphosphate biosynthesis; thiamine diphosphate from thiamine phosphate: step 1/1. Catalyzes the ATP-dependent phosphorylation of thiamine-monophosphate (TMP) to form thiamine-pyrophosphate (TPP), the active form of vitamin B1. This is Thiamine-monophosphate kinase (thiL) from Salmonella typhimurium (strain LT2 / SGSC1412 / ATCC 700720).